The primary structure comprises 314 residues: Methionyl-tRNA formyltransferase (314 aa).

(6S)-5,6,7,8-tetrahydrofolate is bound at residue 108-111 (SLLP).

It belongs to the Fmt family.

The enzyme catalyses L-methionyl-tRNA(fMet) + (6R)-10-formyltetrahydrofolate = N-formyl-L-methionyl-tRNA(fMet) + (6S)-5,6,7,8-tetrahydrofolate + H(+). Its function is as follows. Attaches a formyl group to the free amino group of methionyl-tRNA(fMet). The formyl group appears to play a dual role in the initiator identity of N-formylmethionyl-tRNA by promoting its recognition by IF2 and preventing the misappropriation of this tRNA by the elongation apparatus. This is Methionyl-tRNA formyltransferase from Akkermansia muciniphila (strain ATCC BAA-835 / DSM 22959 / JCM 33894 / BCRC 81048 / CCUG 64013 / CIP 107961 / Muc).